We begin with the raw amino-acid sequence, 217 residues long: Large ribosomal subunit protein bL25 (217 aa).

The interval 185 to 217 is disordered; the sequence is TKETVEDEEAEEAAAEGAEETGETGETEEGGDE. The segment covering 189 to 217 has biased composition (acidic residues); sequence VEDEEAEEAAAEGAEETGETGETEEGGDE.

It belongs to the bacterial ribosomal protein bL25 family. CTC subfamily. In terms of assembly, part of the 50S ribosomal subunit; part of the 5S rRNA/L5/L18/L25 subcomplex. Contacts the 5S rRNA. Binds to the 5S rRNA independently of L5 and L18.

Functionally, this is one of the proteins that binds to the 5S RNA in the ribosome where it forms part of the central protuberance. The sequence is that of Large ribosomal subunit protein bL25 from Desulfosudis oleivorans (strain DSM 6200 / JCM 39069 / Hxd3) (Desulfococcus oleovorans).